A 255-amino-acid chain; its full sequence is Undecaprenyl-diphosphatase (255 aa).

6 helical membrane passes run 1-21, 75-95, 96-116, 174-194, 203-223, and 234-254; these read MDIIQVIVLSIIEGITEFLPI, IIISFIPVGIMGLLFHKIVYQ, LFTVQIVATAFIVGGIIFLIV, TEFSFLGALPVMLAASLFDIV, GDISNLVVGFIVSFFMALITI, and NFVPFGIYRILFGVILLMFFV.

Belongs to the UppP family.

The protein resides in the cell membrane. The enzyme catalyses di-trans,octa-cis-undecaprenyl diphosphate + H2O = di-trans,octa-cis-undecaprenyl phosphate + phosphate + H(+). Catalyzes the dephosphorylation of undecaprenyl diphosphate (UPP). The polypeptide is Undecaprenyl-diphosphatase (Methanococcus aeolicus (strain ATCC BAA-1280 / DSM 17508 / OCM 812 / Nankai-3)).